The chain runs to 737 residues: Cellulose synthase-like protein E1 (737 aa).

Transmembrane regions (helical) follow at residues 26–45 and 58–78; these read AVYR…VLYY and AAWL…VIAQ. Active-site residues include Asp-146 and Asp-451. A run of 5 helical transmembrane segments spans residues 528 to 548, 551 to 571, 654 to 674, 683 to 703, and 716 to 736; these read LWAA…LGLV, TPLF…VFCV, VIIA…LSQI, WNVF…NMPI, and IPTA…LVPI.

This sequence belongs to the glycosyltransferase 2 family. Plant cellulose synthase-like E subfamily.

It is found in the golgi apparatus membrane. In terms of biological role, thought to be a Golgi-localized beta-glycan synthase that polymerize the backbones of noncellulosic polysaccharides (hemicelluloses) of plant cell wall. In Oryza sativa subsp. japonica (Rice), this protein is Cellulose synthase-like protein E1 (CSLE1).